Reading from the N-terminus, the 443-residue chain is Thymidine phosphorylase (443 aa).

This sequence belongs to the thymidine/pyrimidine-nucleoside phosphorylase family. As to quaternary structure, homodimer.

The catalysed reaction is thymidine + phosphate = 2-deoxy-alpha-D-ribose 1-phosphate + thymine. It participates in pyrimidine metabolism; dTMP biosynthesis via salvage pathway; dTMP from thymine: step 1/2. Functionally, the enzymes which catalyze the reversible phosphorolysis of pyrimidine nucleosides are involved in the degradation of these compounds and in their utilization as carbon and energy sources, or in the rescue of pyrimidine bases for nucleotide synthesis. The polypeptide is Thymidine phosphorylase (Shewanella oneidensis (strain ATCC 700550 / JCM 31522 / CIP 106686 / LMG 19005 / NCIMB 14063 / MR-1)).